A 190-amino-acid polypeptide reads, in one-letter code: Cancer-related nucleoside-triphosphatase (190 aa).

Ala-2 carries the N-acetylalanine modification. ATP-binding positions include 9-16 (GPPGVGKT) and 109-116 (VCVIDEIG). Lys-165 is subject to N6-acetyllysine.

The protein belongs to the THEP1 NTPase family. As to quaternary structure, monomer.

It carries out the reaction a ribonucleoside 5'-triphosphate + H2O = a ribonucleoside 5'-diphosphate + phosphate + H(+). The catalysed reaction is 5-methyl-UTP + H2O = 5-methyl-UDP + phosphate + H(+). It catalyses the reaction CTP + H2O = CDP + phosphate + H(+). The enzyme catalyses ATP + H2O = ADP + phosphate + H(+). It carries out the reaction GTP + H2O = GDP + phosphate + H(+). Its function is as follows. Has nucleotide phosphatase activity towards ATP, GTP, CTP, TTP and UTP. Hydrolyzes nucleoside diphosphates with lower efficiency. In Homo sapiens (Human), this protein is Cancer-related nucleoside-triphosphatase.